Here is a 1281-residue protein sequence, read N- to C-terminus: Tubulin polyglutamylase TTLL5 (1281 aa).

In terms of domain architecture, TTL spans 62–407 (RYHLSYKIVR…VCQDPAQRAS (346 aa)). Residues K180, 186–187 (RG), 208–211 (SRYI), and 221–223 (KFD) contribute to the ATP site. A protein is bound at residue R186. Residue R247 coordinates L-glutamate. Residue 268–269 (TN) participates in ATP binding. Y270, S271, and K293 together coordinate L-glutamate. Residues D353, E366, and N368 each contribute to the Mg(2+) site. The c-MTBD region stretch occupies residues 378–488 (PLDLKIKASM…RGGFIRIFPT (111 aa)). Residue K384 coordinates L-glutamate. Disordered stretches follow at residues 577–614 (MNVKTETESEEEEEVALDNEDEEQEASQEESAGFLREN), 1072–1114 (SASA…LQTG), and 1199–1281 (SSAT…HTKI). Residues 584–604 (ESEEEEEVALDNEDEEQEASQ) show a composition bias toward acidic residues. 4 stretches are compositionally biased toward polar residues: residues 1086-1113 (SGPTWSTQSDPQAPENHSSSPGSRSLQT), 1199-1212 (SSATASGQKPTTLP), 1240-1263 (ATSQKASKGSSAEGQLNGLQSSLN), and 1270-1281 (ITSSTDPAHTKI).

Belongs to the tubulin--tyrosine ligase family. Interacts with the transcriptional coactivators NCOA1/SRC-1 and NCOA2/TIF2. It depends on Mg(2+) as a cofactor. Expressed in the retina, found in the rod and cone photoreceptors (at protein level). Widely expressed with highest levels in heart and skeletal muscle and low levels in other tissues.

Its subcellular location is the cell projection. It localises to the cilium. It is found in the cytoplasm. The protein localises to the cytoskeleton. The protein resides in the cilium basal body. Its subcellular location is the nucleus. The catalysed reaction is L-glutamyl-[protein] + L-glutamate + ATP = gamma-L-glutamyl-L-glutamyl-[protein] + ADP + phosphate + H(+). It catalyses the reaction (L-glutamyl)(n)-gamma-L-glutamyl-L-glutamyl-[protein] + L-glutamate + ATP = (L-glutamyl)(n+1)-gamma-L-glutamyl-L-glutamyl-[protein] + ADP + phosphate + H(+). Functionally, polyglutamylase which modifies tubulin, generating polyglutamate side chains on the gamma-carboxyl group of specific glutamate residues within the C-terminal tail of tubulin. Preferentially mediates ATP-dependent initiation step of the polyglutamylation reaction over the elongation step. Preferentially modifies the alpha-tubulin tail over a beta-tail. Required for CCSAP localization to both polyglutamylated spindle and cilia microtubules. Increases the effects of transcriptional coactivator NCOA2/TIF2 in glucocorticoid receptor-mediated repression and induction and in androgen receptor-mediated induction. This Homo sapiens (Human) protein is Tubulin polyglutamylase TTLL5.